Reading from the N-terminus, the 1673-residue chain is MWDGQSEMCQAHVLFDSFVQAATCKETLRAFQDLCEELNLNPGGQPQFYHTLRSRLHYWKAKALWAKLDKRACQKEYMRGHACTSTTCLIIGAGPCGLRTAIELGFLGARVVLVEKRDAFSRNNVLHLWPFTIQDLRGLGAKKFYGKFCAGAIDHISIRQLQLMLLKVALLLGVEVHVNVEFKHLLEPPENQEKRVGWRAEVQPSSHPVRQLEFDVVIGADGRRNTLPGFRRKEFRGKLAIAITANFINRNTTAEAKVEEISGVAFIFNQRFFQDLRQATGIDLENIVYYKDDTHYFVMTAKKQSLLEKGVILRDYADTEMLLSRHNVDQNALLSYAREAADFSTNHQLPALDFAINHYGQSDVAMFDFTCMYASENAAMVRQRMGHPLLVALVGDSLLEPFWPMGTGIARGFLAAMDTAWMVRSWGQGNTPLEVLAERESVYRLLPQTTPENVSKNYSQFSVDPASRYPNINMQLINAAQVRHLIDTGEGPVLGLDAVSSPHPRLTRQESMARYSKLLSWCQEHTHGYRKVCVTDFTSSWRSGLALCALIHTFRPDLIDFASLEESEAEFSGQLGLDVAEQEFGICPIMTGKEMSVLEESDSLCMVMYLSQLHELLKDTSPPSGSQSSEERAVLFSSSRSPISLLSKLGQSLSRKRNPKDKKEKEADSVGKRRRTSQAGQSEEEDALHDGNENKSPAETPGSEPKASEGHSKVRSMASLLLAKFEENSPSPSTTAIRRQNYIHMYTGGVSSLALQIANQIQSQQAQAPKLLHRRESGSQKDLPVNVGSSDVCYFCGRRVYVMERLSAEGKFFHRSCFQCDHCSSTIRLSNYTYDQLHGKFYCKHHFSFRLASVAQRKRPAPPVAPRPAQASLAASSASTSLSSLGSVGTATPDSWSSSTHTDMASSLAKRLCGTPERIELENYKPSPQKQDSPLQEVPEETLAQHNLSASLQEKNAEEQSSSSESDLEEEELVWKKGEELHARTNGERKLDLEEELKEEEGGEKLEKQEGEEEGEVSEEEQDEGDSSDESYEGCSDDPDIDVSSLSESKLCDQREQEESVPFHQSPASTESPVSMKPSESDLTPDPSTTPESSPAKRSEVVEEFWMKSAEIRKSLGLTPLSRELQPKHIAASTQTSNVKESFYTSVTYNTAALDSPNQSARICDSSTQTHSVTDLQETSPLGPTDGDAGVDLGRCSVVHRLSITVEGCVMADNQGLDSTSFATESVLNPDAGLPTPPYSPSHSPLVGKQCRALHHSEPILDREVMAFSSTCTASVPQRSSFKSDLEQAQSLPPDEIEILCGDEAEKLPERSCRMESGEVDNRRAEHSRTLPDRVVAPLLAGGPEVRLRRSEMKLWGPDADGDVKEKKRSSLFSPRKSRKNGNAAAESGRETGKHKSLWKTVFSVYKKDKKRKEVAVVAETLPAANNGSKRKVSGINRTTDLCFRKNPSFSEDTDMSCHALLERCPLRAQRAGTEEELNARLTRRVQRAARRQAKQEELRRLHRAQIIQRQLEQVEVKQRQLEEKGVAVEKALRGEADFWEDSSTSVLLDVHLCGMGKKDDPSLMHQWFKLVQEKNALVRYESELMIFARELELEDRQSRLQQELRERMAVDDHLKGEEELAEERRILSEMLDVVEQRDALVALLEEQRVREKEEDSDLEAVMLSKGFSLHWD.

Residues 2–492 form a monooxygenase domain region; that stretch reads WDGQSEMCQA…RHLIDTGEGP (491 aa). Residues Cys-96, 96–124, Glu-115, Arg-117, Arg-122, Asn-124, and Asp-396 each bind FAD; that span reads CGLRTAIELGFLGARVVLVEKRDAFSRNN. The region spanning 512–618 is the Calponin-homology (CH) domain; it reads MARYSKLLSW…YLSQLHELLK (107 aa). The interval 647-714 is disordered; it reads SKLGQSLSRK…PKASEGHSKV (68 aa). The segment covering 661–671 has biased composition (basic and acidic residues); that stretch reads DKKEKEADSVG. The 63-residue stretch at 791–853 folds into the LIM zinc-binding domain; it reads DVCYFCGRRV…KHHFSFRLAS (63 aa). Positions 882–892 are enriched in low complexity; that stretch reads LSSLGSVGTAT. Disordered stretches follow at residues 882-901, 918-938, 951-1100, 1159-1188, and 1357-1393; these read LSSLGSVGTATPDSWSSSTH, RIELENYKPSPQKQDSPLQEV, SLQE…KRSE, QSARICDSSTQTHSVTDLQETSPLGPTDGD, and GPDADGDVKEKKRSSLFSPRKSRKNGNAAAESGRETG. Basic and acidic residues predominate over residues 973 to 992; that stretch reads LVWKKGEELHARTNGERKLD. 2 stretches are compositionally biased toward acidic residues: residues 993–1002 and 1010–1041; these read LEEELKEEEG and EGEEEGEVSEEEQDEGDSSDESYEGCSDDPDI. The span at 1081–1094 shows a compositional bias: low complexity; the sequence is SDLTPDPSTTPESS. Polar residues predominate over residues 1159 to 1182; that stretch reads QSARICDSSTQTHSVTDLQETSPL. Coiled coils occupy residues 1475–1531 and 1573–1638; these read EEEL…AVEK and QEKN…VEQR. Residues 1495 to 1661 enclose the bMERB domain; it reads KQEELRRLHR…EKEEDSDLEA (167 aa).

This sequence belongs to the Mical family. FAD is required as a cofactor.

The protein localises to the cytoplasm. It is found in the cytoskeleton. It localises to the nucleus. It catalyses the reaction L-methionyl-[F-actin] + NADPH + O2 + H(+) = L-methionyl-(R)-S-oxide-[F-actin] + NADP(+) + H2O. In terms of biological role, monooxygenase that promotes depolymerization of F-actin by mediating oxidation of specific methionine residues on actin. Acts by modifying actin subunits through the addition of oxygen to form methionine-sulfoxide, leading to promote actin filament severing and prevent repolymerization. Involved in exocytic vesicles tethering and fusion: the monooxygenase activity is required for this process. The protein is Protein-methionine sulfoxide oxidase mical3b (mical3b) of Danio rerio (Zebrafish).